The primary structure comprises 47 residues: Large ribosomal subunit protein eL40 (47 aa).

It belongs to the eukaryotic ribosomal protein eL40 family.

This chain is Large ribosomal subunit protein eL40, found in Methanocaldococcus jannaschii (strain ATCC 43067 / DSM 2661 / JAL-1 / JCM 10045 / NBRC 100440) (Methanococcus jannaschii).